Reading from the N-terminus, the 126-residue chain is Glycine cleavage system H protein (126 aa).

Residues 23 to 105 (AATVGITDHA…YGEGWLLRVR (83 aa)) enclose the Lipoyl-binding domain. Position 64 is an N6-lipoyllysine (K64).

This sequence belongs to the GcvH family. As to quaternary structure, the glycine cleavage system is composed of four proteins: P, T, L and H. (R)-lipoate is required as a cofactor.

The glycine cleavage system catalyzes the degradation of glycine. The H protein shuttles the methylamine group of glycine from the P protein to the T protein. The chain is Glycine cleavage system H protein from Rubrobacter xylanophilus (strain DSM 9941 / JCM 11954 / NBRC 16129 / PRD-1).